We begin with the raw amino-acid sequence, 2909 residues long: Micronemal protein 15 (2909 aa).

A signal peptide spans 1 to 29 (MVFRATREPFRLPLVAAFIALFLLKGVTC). 11 N-linked (GlcNAc...) asparagine glycosylation sites follow: Asn-512, Asn-563, Asn-792, Asn-813, Asn-986, Asn-1007, Asn-1057, Asn-1142, Asn-1319, Asn-1395, and Asn-1713. Residues 1755–1811 (TAIVGEWGEWSACTGTCFSQWWTPKRTRTRLVLAELSHSQIPSVSETATCLDLPPCG) enclose the TSP type-1 1 domain. The tract at residues 1937–2073 (RRKGIMSRRR…RSQARNQTPD (137 aa)) is disordered. Over residues 1967–1977 (SEQSGKASQNG) the composition is skewed to polar residues. Residue Asn-1976 is glycosylated (N-linked (GlcNAc...) asparagine). Over residues 1978 to 1988 (SRRHRASRKQK) the composition is skewed to basic residues. Residues 2004–2016 (GESTLHGTGTNAY) are compositionally biased toward polar residues. The span at 2049 to 2065 (KARRARRGAGRFRKSRS) shows a compositional bias: basic residues. A glycan (N-linked (GlcNAc...) asparagine) is linked at Asn-2333. The region spanning 2484–2549 (TCDYTEWSEW…EKCDWMPVCP (66 aa)) is the TSP type-1 2 domain. Cystine bridges form between Cys-2485–Cys-2528, Cys-2496–Cys-2500, and Cys-2542–Cys-2548. The disordered stretch occupies residues 2552 to 2587 (EGEEEDDATGGVEPRGEPIVPPWSPERPTDENNQAM). N-linked (GlcNAc...) asparagine glycosylation is present at Asn-2706. The helical transmembrane segment at 2709–2729 (TWVICLLLGVGGGICFVLSCV) threads the bilayer. 3 N-linked (GlcNAc...) asparagine glycosylation sites follow: Asn-2751, Asn-2768, and Asn-2793. The tract at residues 2759–2846 (ESHKLRRQGN…IGQTSPTQQR (88 aa)) is disordered. The segment covering 2801–2815 (PEEEPWQFEDRDEEP) has biased composition (acidic residues). Over residues 2837–2846 (IGQTSPTQQR) the composition is skewed to polar residues.

Component of a complex, at least composed of cysteine repeat modular protein A (CRMPa), cysteine repeat modular protein B (CRMPb), micronemal protein 15 (MIC15) and thrombospondin type 1 domain-containing protein (TSP1).

The protein localises to the membrane. Its function is as follows. Required for rhoptry secretion. Plays a role in host cell invasion. In Toxoplasma gondii, this protein is Micronemal protein 15.